Reading from the N-terminus, the 95-residue chain is Acylphosphatase (95 aa).

In terms of domain architecture, Acylphosphatase-like spans 7-95 (CTMAWVYGSV…RSWDKFAILY (89 aa)). Catalysis depends on residues Arg22 and Asn40.

The protein belongs to the acylphosphatase family.

It catalyses the reaction an acyl phosphate + H2O = a carboxylate + phosphate + H(+). The polypeptide is Acylphosphatase (acyP) (Klebsiella pneumoniae subsp. pneumoniae (strain ATCC 700721 / MGH 78578)).